A 502-amino-acid polypeptide reads, in one-letter code: MLLDVNTNHTLMHDAHVHEHCLIKSIRDDGALHSWSDSSKVFYPKSFYATATNKKNNKLASASMNKTATSNRTVSDEIYFHSTKPQFDGQGSAERTRTLTKRNSFKRTRILKARDDSELLNENRSSLMTPSLSSVMSQVRKTNSAKTLSGECPIHEGHLTQSIKRKFSEEAQSDCSSLSSSKLHPLTDDIADAVDLQTPAIGDEVLAEPVVPKMKIININDLDLFDDWEVKDLVDIFPPVYERRPRSSSALSLVSASSDAKLRPTSVDFQIIDKKGGKTSRRKSRSKSTTENMIYENDLVELEQWPSASPSPETDGSIASSELLPNKRIRQKSLNTNFLKLYSIETSCKRKSILPEVEVDDHLLKQLTYSEIRSLEIKKEPNVSTNDIKLALITRKKLWSDMVHETRNDLFGDSTPWNLHFVATTSNTEPSQGRESASEHATADLKSSLVRVHSDVKPWFNNGGTMLKPCGKLNLGKVTNKTSAPTREIQYVVKGWCDSRFL.

Its subcellular location is the cytoplasm. It localises to the nucleus. This Saccharomyces cerevisiae (strain ATCC 204508 / S288c) (Baker's yeast) protein is Protein GIS3 (GIS3).